The chain runs to 336 residues: tRNA-cytidine(32) 2-sulfurtransferase (336 aa).

Residues 1-42 (MNAPDTLTGLEANAPVTEEAPAASEAERKRAHTRREQKEQYE) are disordered. The PP-loop motif signature appears at 75 to 80 (SGGKDS). The [4Fe-4S] cluster site is built by cysteine 150, cysteine 153, and cysteine 241. The disordered stretch occupies residues 301–328 (PHGDIAFDEEPCSADSASNQTQRPSQTV). The segment covering 315-328 (DSASNQTQRPSQTV) has biased composition (polar residues).

The protein belongs to the TtcA family. As to quaternary structure, homodimer. Requires Mg(2+) as cofactor. The cofactor is [4Fe-4S] cluster.

It localises to the cytoplasm. The catalysed reaction is cytidine(32) in tRNA + S-sulfanyl-L-cysteinyl-[cysteine desulfurase] + AH2 + ATP = 2-thiocytidine(32) in tRNA + L-cysteinyl-[cysteine desulfurase] + A + AMP + diphosphate + H(+). The protein operates within tRNA modification. Catalyzes the ATP-dependent 2-thiolation of cytidine in position 32 of tRNA, to form 2-thiocytidine (s(2)C32). The sulfur atoms are provided by the cysteine/cysteine desulfurase (IscS) system. The chain is tRNA-cytidine(32) 2-sulfurtransferase from Paraburkholderia phymatum (strain DSM 17167 / CIP 108236 / LMG 21445 / STM815) (Burkholderia phymatum).